A 603-amino-acid chain; its full sequence is Elongation factor 4 (603 aa).

A tr-type G domain is found at 7–189 (SRIRNFSIIA…SIVHLVPPPQ (183 aa)). GTP-binding positions include 19–24 (DHGKST) and 136–139 (NKID).

The protein belongs to the TRAFAC class translation factor GTPase superfamily. Classic translation factor GTPase family. LepA subfamily.

The protein resides in the cell inner membrane. It catalyses the reaction GTP + H2O = GDP + phosphate + H(+). Its function is as follows. Required for accurate and efficient protein synthesis under certain stress conditions. May act as a fidelity factor of the translation reaction, by catalyzing a one-codon backward translocation of tRNAs on improperly translocated ribosomes. Back-translocation proceeds from a post-translocation (POST) complex to a pre-translocation (PRE) complex, thus giving elongation factor G a second chance to translocate the tRNAs correctly. Binds to ribosomes in a GTP-dependent manner. The chain is Elongation factor 4 from Cyanothece sp. (strain PCC 7425 / ATCC 29141).